The chain runs to 208 residues: Protein-L-isoaspartate O-methyltransferase (208 aa).

Ser-59 is an active-site residue.

It belongs to the methyltransferase superfamily. L-isoaspartyl/D-aspartyl protein methyltransferase family.

It is found in the cytoplasm. It carries out the reaction [protein]-L-isoaspartate + S-adenosyl-L-methionine = [protein]-L-isoaspartate alpha-methyl ester + S-adenosyl-L-homocysteine. Functionally, catalyzes the methyl esterification of L-isoaspartyl residues in peptides and proteins that result from spontaneous decomposition of normal L-aspartyl and L-asparaginyl residues. It plays a role in the repair and/or degradation of damaged proteins. This chain is Protein-L-isoaspartate O-methyltransferase, found in Citrobacter koseri (strain ATCC BAA-895 / CDC 4225-83 / SGSC4696).